A 113-amino-acid chain; its full sequence is Small ribosomal subunit protein uS14m (113 aa).

The protein belongs to the universal ribosomal protein uS14 family. As to quaternary structure, component of the mitochondrial small ribosomal subunit (mt-SSU). Mature N.crassa 74S mitochondrial ribosomes consist of a small (37S) and a large (54S) subunit. The 37S small subunit contains a 16S ribosomal RNA (16S mt-rRNA) and 32 different proteins. The 54S large subunit contains a 23S rRNA (23S mt-rRNA) and 42 different proteins.

The protein resides in the mitochondrion. Component of the mitochondrial ribosome (mitoribosome), a dedicated translation machinery responsible for the synthesis of mitochondrial genome-encoded proteins, including at least some of the essential transmembrane subunits of the mitochondrial respiratory chain. The mitoribosomes are attached to the mitochondrial inner membrane and translation products are cotranslationally integrated into the membrane. This chain is Small ribosomal subunit protein uS14m (mrp2), found in Neurospora crassa (strain ATCC 24698 / 74-OR23-1A / CBS 708.71 / DSM 1257 / FGSC 987).